The primary structure comprises 91 residues: Acylphosphatase (91 aa).

The Acylphosphatase-like domain occupies 3–91; it reads HIKVNVKGQV…TELTKFEVKY (89 aa). Active-site residues include Arg18 and Asn36.

It belongs to the acylphosphatase family.

It catalyses the reaction an acyl phosphate + H2O = a carboxylate + phosphate + H(+). The protein is Acylphosphatase (acyP) of Oceanobacillus iheyensis (strain DSM 14371 / CIP 107618 / JCM 11309 / KCTC 3954 / HTE831).